A 238-amino-acid chain; its full sequence is uncharacterized protein (238 aa).

2 disordered regions span residues 1–51 (MPCT…ASCA) and 214–238 (ITVEPAGGSAEPTSDPVALMNFPTA). Positions 16–31 (ATWRTARPAPRRCGSC) are enriched in low complexity.

This is an uncharacterized protein from Streptomyces griseus.